A 353-amino-acid chain; its full sequence is tRNA N6-adenosine threonylcarbamoyltransferase (353 aa).

The Fe cation site is built by His-111 and His-115. Substrate is bound by residues 134-138 (LVSGG), Asp-167, Gly-180, Asp-184, and Asn-279. Position 307 (Asp-307) interacts with Fe cation.

Belongs to the KAE1 / TsaD family. It depends on Fe(2+) as a cofactor.

The protein resides in the cytoplasm. It catalyses the reaction L-threonylcarbamoyladenylate + adenosine(37) in tRNA = N(6)-L-threonylcarbamoyladenosine(37) in tRNA + AMP + H(+). In terms of biological role, required for the formation of a threonylcarbamoyl group on adenosine at position 37 (t(6)A37) in tRNAs that read codons beginning with adenine. Is involved in the transfer of the threonylcarbamoyl moiety of threonylcarbamoyl-AMP (TC-AMP) to the N6 group of A37, together with TsaE and TsaB. TsaD likely plays a direct catalytic role in this reaction. The polypeptide is tRNA N6-adenosine threonylcarbamoyltransferase (Thermosynechococcus vestitus (strain NIES-2133 / IAM M-273 / BP-1)).